A 353-amino-acid chain; its full sequence is UDP-3-O-acylglucosamine N-acyltransferase (353 aa).

Catalysis depends on H242, which acts as the Proton acceptor.

Belongs to the transferase hexapeptide repeat family. LpxD subfamily. Homotrimer.

It catalyses the reaction a UDP-3-O-[(3R)-3-hydroxyacyl]-alpha-D-glucosamine + a (3R)-hydroxyacyl-[ACP] = a UDP-2-N,3-O-bis[(3R)-3-hydroxyacyl]-alpha-D-glucosamine + holo-[ACP] + H(+). The protein operates within bacterial outer membrane biogenesis; LPS lipid A biosynthesis. Its function is as follows. Catalyzes the N-acylation of UDP-3-O-acylglucosamine using 3-hydroxyacyl-ACP as the acyl donor. Is involved in the biosynthesis of lipid A, a phosphorylated glycolipid that anchors the lipopolysaccharide to the outer membrane of the cell. The polypeptide is UDP-3-O-acylglucosamine N-acyltransferase (Pseudomonas aeruginosa (strain LESB58)).